The sequence spans 257 residues: MLSPCPILPSAECRDTADTPADPPGRVIPINRRRRRPGDWRPERPRERLLERGPAALTDDELIALLLGTGKPGHDVFVTARALVDQFGTLHGLLEATADDFEAHPGIGPARSARLVAVTEIARRMLVEKAEERMQIDSPGAVEDCLRLKIGTRQYEVFIAVYLDARNRLIDMEEIARGSLTRMAVYPREIVRRAMKHNAAALIVAHNHPSGAVQPSAEDRRLTRVLKDALELVDVRLLDHVVVGVSDTFSFARAGWL.

Positions methionine 1–glycine 53 are disordered. The span at proline 37–glutamate 51 shows a compositional bias: basic and acidic residues. An MPN domain is found at glutamine 135 to leucine 257. Zn(2+) contacts are provided by histidine 206, histidine 208, and aspartate 219. The JAMM motif motif lies at histidine 206–aspartate 219.

Belongs to the UPF0758 family.

This Burkholderia orbicola (strain MC0-3) protein is UPF0758 protein Bcenmc03_2526.